We begin with the raw amino-acid sequence, 122 residues long: Large ribosomal subunit protein uL14 (122 aa).

This sequence belongs to the universal ribosomal protein uL14 family. In terms of assembly, part of the 50S ribosomal subunit. Forms a cluster with proteins L3 and L19. In the 70S ribosome, L14 and L19 interact and together make contacts with the 16S rRNA in bridges B5 and B8.

Functionally, binds to 23S rRNA. Forms part of two intersubunit bridges in the 70S ribosome. In Pseudomonas paraeruginosa (strain DSM 24068 / PA7) (Pseudomonas aeruginosa (strain PA7)), this protein is Large ribosomal subunit protein uL14.